The primary structure comprises 198 residues: Thymidine kinase (198 aa).

Residues 9 to 16 and 87 to 90 contribute to the ATP site; these read STMNAGKS and DEAQ. The Proton acceptor role is filled by Glu-88. Zn(2+) is bound by residues Cys-145, Cys-147, Cys-182, and His-185.

Belongs to the thymidine kinase family. Homotetramer.

The protein localises to the cytoplasm. It carries out the reaction thymidine + ATP = dTMP + ADP + H(+). In Ruegeria pomeroyi (strain ATCC 700808 / DSM 15171 / DSS-3) (Silicibacter pomeroyi), this protein is Thymidine kinase.